The chain runs to 92 residues: Small nuclear ribonucleoprotein E (92 aa).

Positions 18–92 (INLIFRYLQN…NITLLQSVSN (75 aa)) constitute a Sm domain.

It belongs to the snRNP Sm proteins family. Core component of the spliceosomal U1, U2, U4 and U5 small nuclear ribonucleoproteins (snRNPs), the building blocks of the spliceosome. Most spliceosomal snRNPs contain a common set of Sm proteins, SNRPB, SNRPD1, SNRPD2, SNRPD3, SNRPE, SNRPF and SNRPG that assemble in a heptameric protein ring on the Sm site of the small nuclear RNA to form the core snRNP. Component of the U1 snRNP. The U1 snRNP is composed of the U1 snRNA and the 7 core Sm proteins SNRPB, SNRPD1, SNRPD2, SNRPD3, SNRPE, SNRPF and SNRPG, and at least three U1 snRNP-specific proteins SNRNP70/U1-70K, SNRPA/U1-A and SNRPC/U1-C. Component of the U4/U6-U5 tri-snRNP complex composed of the U4, U6 and U5 snRNAs and at least PRPF3, PRPF4, PRPF6, PRPF8, PRPF31, SNRNP200, TXNL4A, SNRNP40, SNRPB, SNRPD1, SNRPD2, SNRPD3, SNRPE, SNRPF, SNRPG, DDX23, CD2BP2, PPIH, SNU13, EFTUD2, SART1 and USP39, plus LSM2, LSM3, LSM4, LSM5, LSM6, LSM7 and LSM8. Component of the U7 snRNP complex, or U7 Sm protein core complex, that is composed of the U7 snRNA and at least LSM10, LSM11, SNRPB, SNRPD3, SNRPE, SNRPF and SNRPG; the complex does not contain SNRPD1 and SNRPD2. Component of the minor spliceosome, which splices U12-type introns. Part of the SMN-Sm complex that contains SMN1, GEMIN2/SIP1, DDX20/GEMIN3, GEMIN4, GEMIN5, GEMIN6, GEMIN7, GEMIN8, STRAP/UNRIP and the Sm proteins SNRPB, SNRPD1, SNRPD2, SNRPD3, SNRPE, SNRPF and SNRPG; catalyzes core snRNPs assembly. Forms a 6S pICln-Sm complex composed of CLNS1A/pICln, SNRPD1, SNRPD2, SNRPE, SNRPF and SNRPG; ring-like structure where CLNS1A/pICln mimics additional Sm proteins and which is unable to assemble into the core snRNP. Interacts with SMN1; the interaction is direct. Interacts with GEMIN2 (via N-terminus); the interaction is direct. Interacts with SNRPF; the interaction is direct. Interacts with SNRPG; the interaction is direct.

The protein resides in the cytoplasm. It is found in the cytosol. It localises to the nucleus. In terms of biological role, plays a role in pre-mRNA splicing as a core component of the spliceosomal U1, U2, U4 and U5 small nuclear ribonucleoproteins (snRNPs), the building blocks of the spliceosome. Component of both the pre-catalytic spliceosome B complex and activated spliceosome C complexes. As a component of the minor spliceosome, involved in the splicing of U12-type introns in pre-mRNAs. As part of the U7 snRNP it is involved in histone 3'-end processing. The protein is Small nuclear ribonucleoprotein E (SNRPE) of Bos taurus (Bovine).